The chain runs to 590 residues: Oleate hydratase (590 aa).

FAD contacts are provided by A33, E56, S64, and E82. E82 (proton acceptor) is an active-site residue. Catalysis depends on Y200, which acts as the Proton donor. 4 residues coordinate FAD: V249, S291, T508, and S512.

The protein belongs to the oleate hydratase family. Monomer and homodimer. Both forms seem to be active. Requires FAD as cofactor.

The catalysed reaction is (R)-10-hydroxyoctadecanoate = (9Z)-octadecenoate + H2O. It carries out the reaction (9Z)-octadecenoate + H2O = 10-hydroxyoctadecanoate. It catalyses the reaction (9Z)-hexadecenoate + H2O = 10-hydroxyhexadecanoate. The enzyme catalyses (9Z,12Z)-octadecadienoate + H2O = (12Z)-10-hydroxyoctadecenoate. The catalysed reaction is (12Z)-10-hydroxyoctadecenoate + H2O = 10,13-dihydroxyoctadecanoate. It carries out the reaction (9Z,12Z,15Z)-octadecatrienoate + H2O = (12Z,15Z)-10-hydroxyoctadecadienoate. Its pathway is lipid metabolism; fatty acid metabolism. In terms of biological role, catalyzes the hydration of oleate at its cis-9-double bond to yield 10-hydroxyoctadecanoate, probably in the (R) configuration, and of linoleate at its cis-9- and cis-12-double bond to yield 10-hydroxy-12-octadecenoate and 10,13-dihydroxyoctadecanoate. Is not active on trans-double bonds and esterified fatty acids as substrate; is only active on cis-9- and/or cis-12-double bond of C16 and C18 fatty acids without any trans-configurations, producing 10-hydroxy and 10,13-dihydroxy derivatives. Appears to play a role in oleic acid detoxification and bacterial virulence. The sequence is that of Oleate hydratase (sph) from Streptococcus pyogenes serotype M49 (strain NZ131).